Reading from the N-terminus, the 322-residue chain is Allergen Asp f 4 (322 aa).

Positions 1 to 20 (MQLKNSMLLLTALAAGSSVA) are cleaved as a signal peptide. The span at 80–105 (AAAAAASTPEPSSSHSDSSSSSGVSA) shows a compositional bias: low complexity. Residues 80-109 (AAAAAASTPEPSSSHSDSSSSSGVSADWTN) are disordered.

The protein localises to the secreted. The chain is Allergen Asp f 4 from Aspergillus fumigatus (strain ATCC MYA-4609 / CBS 101355 / FGSC A1100 / Af293) (Neosartorya fumigata).